A 381-amino-acid polypeptide reads, in one-letter code: NF-kappa-B inhibitor-like protein 1 (381 aa).

The interval 1–34 is disordered; it reads MSNPSPQVPEEEASTSVCRPKSSMASTSRRQRRE. ANK repeat units lie at residues 64–93 and 97–133; these read GQPPPLHRACARHDAPALCLLLRLGADPAH and HGDTALHAAARQGPDAYTDFFLPLLSRCPSAMGIKNK. Disordered regions lie at residues 131–167, 186–242, and 256–294; these read KNKDGETPGQILGWGPPWDSAEEEEEDDASKEREWRQ, GDAS…QEEE, and ELRESRARRAQEALGDREPKPARAGPRAEHPRGAGRGSL. Ser150 is subject to Phosphoserine. A compositionally biased stretch (acidic residues) spans 150-159; that stretch reads SAEEEEEDDA. Residues 256–287 show a composition bias toward basic and acidic residues; it reads ELRESRARRAQEALGDREPKPARAGPRAEHPR.

In terms of assembly, interacts with CACTIN (via N-terminal domain); the interaction occurs in a pro-inflammatory-independent manner.

Its subcellular location is the nucleus. Its function is as follows. Involved in the regulation of innate immune response. Acts as negative regulator of Toll-like receptor and interferon-regulatory factor (IRF) signaling pathways. Contributes to the negative regulation of transcriptional activation of NF-kappa-B target genes in response to endogenous pro-inflammatory stimuli. The protein is NF-kappa-B inhibitor-like protein 1 (NFKBIL1) of Macaca mulatta (Rhesus macaque).